A 549-amino-acid chain; its full sequence is Chaperonin GroEL (549 aa).

Residues 30–33, lysine 51, 87–91, glycine 415, and aspartate 496 each bind ATP; these read TLGP and DGTTT.

The protein belongs to the chaperonin (HSP60) family. In terms of assembly, forms a cylinder of 14 subunits composed of two heptameric rings stacked back-to-back. Interacts with the co-chaperonin GroES.

It localises to the cytoplasm. The catalysed reaction is ATP + H2O + a folded polypeptide = ADP + phosphate + an unfolded polypeptide.. Functionally, together with its co-chaperonin GroES, plays an essential role in assisting protein folding. The GroEL-GroES system forms a nano-cage that allows encapsulation of the non-native substrate proteins and provides a physical environment optimized to promote and accelerate protein folding. In Acidiphilium cryptum (strain JF-5), this protein is Chaperonin GroEL.